The following is a 313-amino-acid chain: Ribosomal RNA small subunit methyltransferase H (313 aa).

Residues 35 to 37 (GGH), Asp55, Phe79, Asp101, and Gln108 each bind S-adenosyl-L-methionine.

The protein belongs to the methyltransferase superfamily. RsmH family.

The protein resides in the cytoplasm. The catalysed reaction is cytidine(1402) in 16S rRNA + S-adenosyl-L-methionine = N(4)-methylcytidine(1402) in 16S rRNA + S-adenosyl-L-homocysteine + H(+). Functionally, specifically methylates the N4 position of cytidine in position 1402 (C1402) of 16S rRNA. This chain is Ribosomal RNA small subunit methyltransferase H, found in Escherichia coli O7:K1 (strain IAI39 / ExPEC).